Here is a 262-residue protein sequence, read N- to C-terminus: Chondroitin proteoglycan 3 (262 aa).

The first 17 residues, 1 to 17 (MRSSFIFALLLIGAALA), serve as a signal peptide directing secretion. Positions 37 to 68 (FSGEASGEASGEASGEFSGEGSGEGSGELSPE) are disordered. Low complexity predominate over residues 39–53 (GEASGEASGEASGEF). 3 N-linked (GlcNAc...) asparagine glycosylation sites follow: Asn140, Asn148, and Asn224.

The polypeptide is Chondroitin proteoglycan 3 (cpg-3) (Caenorhabditis briggsae).